Reading from the N-terminus, the 521-residue chain is MEVNGGGAAGLPEAWSQVRAPVIVPLLRLAVAVCLTMSVLLFLERMYMAVVISGVKILRRRPDRRYRCDPIPDDDPELGTSAFPVVLIQIPMFNEREVYQLSIGAVCGLSWPSDRLVVQVLDDSTDPVIKEMVRIECERWAHKGVNITYQIRENRKGYKAGALKEGMKHGYVRECEYVAIFDADFQPDPDFLRRTIPFLVHNSDIALVQARWRFVNADECLMTRMQEMSLDYHFTVEQEVSSSVCAFFGFNGTAGVWRVSAVNEAGGWKDRTTVEDMDLAIRASLKGWKFVYLGDVQVKSELPSTFKAFRFQQHRWSCGPANLFRKMLMEIVRNKKVTIWKKIHVIYNFFLIRKIIAHIVTFAFYCLIIPATIFVPEVRIPKWGCVYIPTIITLLNSVGTPRSFHLLFFWILFENVMSLHRTKATLIGLLEAGRANEWVVTEKLGNALKMKSSSKSSAKKSFMRVWDRLNVTELGVAAFLFSCGWYDLAFGKDHFFIYLFFQGAAFFIVGIGYVGTIVPQS.

A helical transmembrane segment spans residues 22 to 42 (VIVPLLRLAVAVCLTMSVLLF). The active site involves D123. Substrate contacts are provided by D182 and D184. D276 is an active-site residue. 4 helical membrane-spanning segments follow: residues 355–375 (IIAH…TIFV), 391–411 (IITL…FFWI), 471–491 (VTEL…LAFG), and 495–515 (FFIY…GYVG).

Belongs to the glycosyltransferase 2 family. Plant cellulose synthase-like A subfamily.

Its subcellular location is the golgi apparatus membrane. The catalysed reaction is GDP-mannose + (glucomannan)n = GDP + (glucomannan)n+1.. Possesses glucomannan synthase and mannan synthase activities in vitro. Mannan synthase consists of a 4-beta-mannosyltransferase activity on mannan using GDP-mannose. The beta-1,4-mannan product is the backbone for galactomannan synthesis by galactomannan galactosyltransferase. Galactomannan is a noncellulosic polysaccharides of plant cell wall. The protein is Glucomannan 4-beta-mannosyltransferase 1 of Oryza sativa subsp. japonica (Rice).